Reading from the N-terminus, the 501-residue chain is MEALLQLKGIDKAFPGVKALSGAALNVYPGRVMALVGENGAGKSTMMKVLTGIYTRDAGTLLWLGKETTFTGPKSSQEAGIGIIHQELNLIPQLTIAENIFLGREFVNRFGKIDWKTMYAEADKLLAKLNLRFKSDKLVGDLSIGDQQMVEIAKVLSFESKVIIMDEPTDALTDTETESLFRVIRELKLQGRGIVYISHRMKEIFEICDDVTVFRDGQFIAEREVASLTEDSLIEMMVGRKLEDQYPHLDKAPGDIRLKVDNLCGPGVNDVSFTLRKGEILGVSGLMGAGRTELMKVLYGALPRTSGYVTLDGHEVVTRSPQDGLANGIVYISEDRKRDGLVLGMSVKENMSLTALRYFSRAGGSLKHADEQQAVSDFIRLFNVKTPSMEQAIGLLSGGNQQKVAIARGLMTRPKVLILDEPTRGVDVGAKKEIYQLINQFKADGLSIILVSSEMPEVLGMSDRIIVMHEGHLSGEFTREQATQEVLMAAAVGKLNRVNQE.

ABC transporter domains lie at 5–241 (LQLK…VGRK) and 252–495 (APGD…VGKL). Residue 37–44 (GENGAGKS) participates in ATP binding.

Belongs to the ABC transporter superfamily. Ribose importer (TC 3.A.1.2.1) family. As to quaternary structure, the complex is composed of an ATP-binding protein (RbsA), two transmembrane proteins (RbsC) and a solute-binding protein (RbsB).

The protein resides in the cell inner membrane. It catalyses the reaction D-ribose(out) + ATP + H2O = D-ribose(in) + ADP + phosphate + H(+). Functionally, part of the ABC transporter complex RbsABC involved in ribose import. Responsible for energy coupling to the transport system. In Escherichia coli O6:H1 (strain CFT073 / ATCC 700928 / UPEC), this protein is Ribose import ATP-binding protein RbsA.